A 564-amino-acid polypeptide reads, in one-letter code: Alpha-amylase 3 (564 aa).

The first 21 residues, 1 to 21 (MFGVYFVLLFLSSALIHVANA), serve as a signal peptide directing secretion. A disulfide bridge connects residues cysteine 51 and cysteine 59. The substrate site is built by asparagine 56 and tryptophan 105. Asparagine 143 serves as a coordination point for Ca(2+). Cysteine 172 and cysteine 188 are oxidised to a cystine. Residue asparagine 181 is glycosylated (N-linked (GlcNAc...) asparagine). Aspartate 198 provides a ligand contact to Ca(2+). Arginine 227 provides a ligand contact to substrate. Residue aspartate 229 coordinates Ca(2+). Aspartate 229 acts as the Nucleophile in catalysis. 232-233 (KM) provides a ligand contact to substrate. Asparagine 235 carries N-linked (GlcNAc...) asparagine glycosylation. Glutamate 253 serves as a coordination point for Ca(2+). Glutamate 253 serves as the catalytic Proton donor. The cysteines at positions 263 and 306 are disulfide-linked. Asparagine 282 and asparagine 305 each carry an N-linked (GlcNAc...) asparagine glycan. Residues aspartate 322 and arginine 369 each contribute to the substrate site. Asparagine 438, asparagine 447, and asparagine 498 each carry an N-linked (GlcNAc...) asparagine glycan. A lipid anchor (GPI-anchor amidated serine) is attached at serine 538. The propeptide at 539–564 (SSRLILSFKTLVFGLGVTAMLFVLFF) is removed in mature form.

It belongs to the glycosyl hydrolase 13 family. Ca(2+) serves as cofactor. Post-translationally, N-glycosylated.

It is found in the cell membrane. The catalysed reaction is Endohydrolysis of (1-&gt;4)-alpha-D-glucosidic linkages in polysaccharides containing three or more (1-&gt;4)-alpha-linked D-glucose units.. Its function is as follows. Has a role in cell wall biosynthesis where it is involved in maintaining cell wall strength and shape. The protein is Alpha-amylase 3 (aah3) of Schizosaccharomyces pombe (strain 972 / ATCC 24843) (Fission yeast).